The primary structure comprises 333 residues: DNA-directed RNA polymerase subunit alpha (333 aa).

An alpha N-terminal domain (alpha-NTD) region spans residues 1–234 (MQISVNEFLT…QQLAAFVDLK (234 aa)). Positions 248–333 (IDPILLRPVD…SLKKDDKATA (86 aa)) are alpha C-terminal domain (alpha-CTD).

This sequence belongs to the RNA polymerase alpha chain family. In terms of assembly, homodimer. The RNAP catalytic core consists of 2 alpha, 1 beta, 1 beta' and 1 omega subunit. When a sigma factor is associated with the core the holoenzyme is formed, which can initiate transcription.

The enzyme catalyses RNA(n) + a ribonucleoside 5'-triphosphate = RNA(n+1) + diphosphate. DNA-dependent RNA polymerase catalyzes the transcription of DNA into RNA using the four ribonucleoside triphosphates as substrates. This Pseudomonas syringae pv. tomato (strain ATCC BAA-871 / DC3000) protein is DNA-directed RNA polymerase subunit alpha.